Consider the following 204-residue polypeptide: Large ribosomal subunit protein bL25 (204 aa).

This sequence belongs to the bacterial ribosomal protein bL25 family. CTC subfamily. In terms of assembly, part of the 50S ribosomal subunit; part of the 5S rRNA/L5/L18/L25 subcomplex. Contacts the 5S rRNA. Binds to the 5S rRNA independently of L5 and L18.

Its function is as follows. This is one of the proteins that binds to the 5S RNA in the ribosome where it forms part of the central protuberance. This chain is Large ribosomal subunit protein bL25, found in Wolbachia sp. subsp. Brugia malayi (strain TRS).